Here is a 694-residue protein sequence, read N- to C-terminus: Polyphosphate kinase (694 aa).

Position 45 (Asn-45) interacts with ATP. Residues Arg-367 and Arg-397 each contribute to the Mg(2+) site. His-427 (phosphohistidine intermediate) is an active-site residue. Tyr-460, Arg-553, and His-580 together coordinate ATP.

Belongs to the polyphosphate kinase 1 (PPK1) family. Mg(2+) serves as cofactor. Post-translationally, an intermediate of this reaction is the autophosphorylated ppk in which a phosphate is covalently linked to a histidine residue through a N-P bond.

The catalysed reaction is [phosphate](n) + ATP = [phosphate](n+1) + ADP. Catalyzes the reversible transfer of the terminal phosphate of ATP to form a long-chain polyphosphate (polyP). This Campylobacter jejuni subsp. jejuni serotype O:6 (strain 81116 / NCTC 11828) protein is Polyphosphate kinase.